We begin with the raw amino-acid sequence, 426 residues long: Serine--tRNA ligase (426 aa).

Residue 233–235 (TAE) coordinates L-serine. An ATP-binding site is contributed by 264–266 (RSE). Residue glutamate 287 coordinates L-serine. 351 to 354 (EISS) serves as a coordination point for ATP. Serine 387 is a binding site for L-serine.

Belongs to the class-II aminoacyl-tRNA synthetase family. Type-1 seryl-tRNA synthetase subfamily. As to quaternary structure, homodimer. The tRNA molecule binds across the dimer.

Its subcellular location is the cytoplasm. It catalyses the reaction tRNA(Ser) + L-serine + ATP = L-seryl-tRNA(Ser) + AMP + diphosphate + H(+). It carries out the reaction tRNA(Sec) + L-serine + ATP = L-seryl-tRNA(Sec) + AMP + diphosphate + H(+). It participates in aminoacyl-tRNA biosynthesis; selenocysteinyl-tRNA(Sec) biosynthesis; L-seryl-tRNA(Sec) from L-serine and tRNA(Sec): step 1/1. In terms of biological role, catalyzes the attachment of serine to tRNA(Ser). Is also able to aminoacylate tRNA(Sec) with serine, to form the misacylated tRNA L-seryl-tRNA(Sec), which will be further converted into selenocysteinyl-tRNA(Sec). This is Serine--tRNA ligase from Stutzerimonas stutzeri (strain A1501) (Pseudomonas stutzeri).